The following is a 540-amino-acid chain: Glucose-6-phosphate isomerase (540 aa).

The Proton donor role is filled by Glu346. Residues His377 and Lys505 contribute to the active site.

Belongs to the GPI family.

The protein localises to the cytoplasm. It catalyses the reaction alpha-D-glucose 6-phosphate = beta-D-fructose 6-phosphate. Its pathway is carbohydrate biosynthesis; gluconeogenesis. It functions in the pathway carbohydrate degradation; glycolysis; D-glyceraldehyde 3-phosphate and glycerone phosphate from D-glucose: step 2/4. Catalyzes the reversible isomerization of glucose-6-phosphate to fructose-6-phosphate. In Francisella philomiragia subsp. philomiragia (strain ATCC 25017 / CCUG 19701 / FSC 153 / O#319-036), this protein is Glucose-6-phosphate isomerase.